A 315-amino-acid polypeptide reads, in one-letter code: Mitochondrial glycine transporter (315 aa).

3 Solcar repeats span residues 19–102 (SKTT…LRTG), 125–206 (TANL…LKRR), and 221–305 (KSSS…LILR). 6 helical membrane passes run 25–50 (FTAG…TRVQ), 77–103 (GTLP…RTGL), 128–153 (LATG…VRYE), 181–204 (GFGA…EQLK), 225–251 (INFV…KTRL), and 280–298 (GLGL…AWTV).

It belongs to the mitochondrial carrier (TC 2.A.29) family. SLC25A38 subfamily.

It is found in the mitochondrion inner membrane. The enzyme catalyses glycine(in) = glycine(out). Functionally, mitochondrial glycine transporter that imports glycine into the mitochondrial matrix. Plays an important role in providing glycine for the first enzymatic step in heme biosynthesis, the condensation of glycine with succinyl-CoA to produce 5-aminolevulinate (ALA) in the mitochondrial matrix. The polypeptide is Mitochondrial glycine transporter (Aspergillus niger (strain ATCC MYA-4892 / CBS 513.88 / FGSC A1513)).